The sequence spans 154 residues: Ribonuclease H (154 aa).

The 142-residue stretch at 1 to 142 (MLKKIDLYTD…CDELAREAAS (142 aa)) folds into the RNase H type-1 domain. Residues Asp10, Glu48, Asp70, and Asp134 each coordinate Mg(2+). The disordered stretch occupies residues 133 to 154 (CDELAREAASGKQLAEDTGYQP).

Belongs to the RNase H family. Monomer. Requires Mg(2+) as cofactor.

It localises to the cytoplasm. The catalysed reaction is Endonucleolytic cleavage to 5'-phosphomonoester.. In terms of biological role, endonuclease that specifically degrades the RNA of RNA-DNA hybrids. In Aeromonas hydrophila subsp. hydrophila (strain ATCC 7966 / DSM 30187 / BCRC 13018 / CCUG 14551 / JCM 1027 / KCTC 2358 / NCIMB 9240 / NCTC 8049), this protein is Ribonuclease H.